Reading from the N-terminus, the 286-residue chain is Enoyl-CoA hydratase ChsH3 (286 aa).

Positions 163-271 constitute a MaoC-like domain; it reads APERAPDLQV…RLVASVVAPT (109 aa). Catalysis depends on residues Asp-189 and His-194.

This sequence belongs to the enoyl-CoA hydratase/isomerase family. In terms of assembly, homodimer.

The catalysed reaction is (22E)-3-oxochola-4,22-dien-24-oyl-CoA + H2O = (22S)-hydroxy-3-oxo-chol-4-ene-24-oyl-CoA. The protein operates within steroid metabolism; cholesterol degradation. Degradation of the cholesterol side chain involves 3 multistep beta-oxidation cycles, this is involved in the second cycle. Hydrates bulky steroid enoyl-CoA esters, has highest activity with 3-OCDO-CoA (3-oxochol-4,22-dien-24-oyl-CoA) making (22S)-HOCO-CoA, followed by octenoyl-CoA, with weaker activity on 3-OCDS-CoA (3-oxocholest-4,24-dien-26-oyl-CoA) and none on 3-OPDC-CoA (3-oxo-pregna-4,17-diene-20- carboxyl-CoA). Hydrates the same substrate as EchA19, but the 2 enzymes make different stereoisomers of the product. This chain is Enoyl-CoA hydratase ChsH3, found in Mycobacterium tuberculosis (strain ATCC 25618 / H37Rv).